The primary structure comprises 140 residues: MAKKEVAKIKLQIPAGAANPSPPVGPALGQHGLNIMGFCKEFNARTQDQKGMIIPVVITVYADRSFTFITKTPPASVLIMKAAKIEKGSGEPNRNKVGSLTMAQVEEIAKLKLPDLNAAGLESAIKSIAGTARSMGIDVK.

This sequence belongs to the universal ribosomal protein uL11 family. In terms of assembly, part of the ribosomal stalk of the 50S ribosomal subunit. Interacts with L10 and the large rRNA to form the base of the stalk. L10 forms an elongated spine to which L12 dimers bind in a sequential fashion forming a multimeric L10(L12)X complex. One or more lysine residues are methylated.

Its function is as follows. Forms part of the ribosomal stalk which helps the ribosome interact with GTP-bound translation factors. This is Large ribosomal subunit protein uL11 from Desulfovibrio desulfuricans (strain ATCC 27774 / DSM 6949 / MB).